The primary structure comprises 152 residues: Homeobox protein ceh-63 (152 aa).

The segment covering 21 to 30 (NDTNSSQQIK) has biased composition (polar residues). 2 disordered regions span residues 21–48 (NDTN…RTTF) and 92–126 (RRTK…SQHV). The segment covering 35-44 (PPKRSNRPTK) has biased composition (basic residues). A DNA-binding region (homeobox) is located at residues 41–100 (RPTKRTTFTSEQVTLLELEFAKNEYICKDRRGELAQTIELTECQVKTWFQNRRTKKRRCT). The segment covering 116–126 (PSPQNPSSQHV) has biased composition (polar residues).

In terms of assembly, may interact with homeobox protein ceh-14.

It is found in the nucleus. Probable transcription factor, modulating expression of helix-loop-helix protein mbr-1, perhaps acting in concert with homeobox protein ceh-14. May play a minor role in axon guidance in the DVC interneuron. The polypeptide is Homeobox protein ceh-63 (Caenorhabditis elegans).